The chain runs to 61 residues: Cobrotoxin-b (61 aa).

Disulfide bonds link Cys3–Cys23, Cys17–Cys40, Cys42–Cys53, and Cys54–Cys59.

The protein belongs to the three-finger toxin family. Short-chain subfamily. Type I alpha-neurotoxin sub-subfamily. As to expression, expressed by the venom gland.

The protein localises to the secreted. Produces peripheral paralysis by blocking neuromuscular transmission at the postsynaptic site. Binds to the nicotinic acetylcholine receptor. This chain is Cobrotoxin-b, found in Naja kaouthia (Monocled cobra).